The following is an 83-amino-acid chain: MEQMRQDIIELKQNDKSQEQRISLLERTSDRHDQQIQAVTESLSKIHENTTWIKRTITGAIISTLSTVVVGGILTIVWNLVKN.

Residues 1-45 (MEQMRQDIIELKQNDKSQEQRISLLERTSDRHDQQIQAVTESLSK) are a coiled coil. The chain crosses the membrane as a helical span at residues 57–77 (ITGAIISTLSTVVVGGILTIV).

It is found in the host cell inner membrane. Its function is as follows. Probably functions as a holin together with holin-like protein 26. Accumulates harmlessly in the cytoplasmic membrane until it reaches a critical concentration that triggers the formation of micron-scale pores (holes) causing host cell membrane disruption and endolysin escape into the periplasmic space. Determines the precise timing of host cell lysis. In Bacillus subtilis (Bacteriophage SPP1), this protein is Holin-like protein 24.1 (24.1).